We begin with the raw amino-acid sequence, 815 residues long: Polyribonucleotide nucleotidyltransferase (815 aa).

Mg(2+) is bound by residues Asp-489 and Asp-495. In terms of domain architecture, KH spans 556-615; the sequence is PRFYTLQIPTDKIRDLIGPGGKVIRGIVEATGVKIDVEDSGKVNVASSDQEAAKKALKMI. The S1 motif domain occupies 625–692; sequence GKTYLGTVTR…DGNRIKLSRK (68 aa). Residues 700 to 815 are disordered; sequence AKMATEGGGD…GGGGGGRGRG (116 aa). The segment covering 723-734 has biased composition (gly residues); the sequence is APGGVTFEGGYE. Over residues 735–745 the composition is skewed to acidic residues; that stretch reads GGDEPEVEEGE. The span at 775–815 shows a compositional bias: gly residues; it reads PHGGGGGAGRGGRGRRPGGGGGGGRGGHGGRGGGGGGRGRG.

The protein belongs to the polyribonucleotide nucleotidyltransferase family. Mg(2+) serves as cofactor.

Its subcellular location is the cytoplasm. The catalysed reaction is RNA(n+1) + phosphate = RNA(n) + a ribonucleoside 5'-diphosphate. Involved in mRNA degradation. Catalyzes the phosphorolysis of single-stranded polyribonucleotides processively in the 3'- to 5'-direction. The chain is Polyribonucleotide nucleotidyltransferase from Koribacter versatilis (strain Ellin345).